We begin with the raw amino-acid sequence, 67 residues long: DNA-directed RNA polymerase subunit omega (67 aa).

This sequence belongs to the RNA polymerase subunit omega family. As to quaternary structure, the RNAP catalytic core consists of 2 alpha, 1 beta, 1 beta' and 1 omega subunit. When a sigma factor is associated with the core the holoenzyme is formed, which can initiate transcription.

The catalysed reaction is RNA(n) + a ribonucleoside 5'-triphosphate = RNA(n+1) + diphosphate. In terms of biological role, promotes RNA polymerase assembly. Latches the N- and C-terminal regions of the beta' subunit thereby facilitating its interaction with the beta and alpha subunits. This Listeria monocytogenes serotype 4b (strain F2365) protein is DNA-directed RNA polymerase subunit omega.